We begin with the raw amino-acid sequence, 558 residues long: NXPE family member 2 (558 aa).

Residues 17 to 37 form a helical membrane-spanning segment; the sequence is ASARKLFLIVLIIFVFWVVFM.

It belongs to the NXPE family.

The protein resides in the membrane. The chain is NXPE family member 2 (Nxpe2) from Mus musculus (Mouse).